Reading from the N-terminus, the 148-residue chain is tRNA-specific adenosine deaminase (148 aa).

The region spanning 1–116 (MEQALKQARL…SNLRYFNSSA (116 aa)) is the CMP/dCMP-type deaminase domain. Histidine 48 lines the Zn(2+) pocket. Glutamate 50 functions as the Proton donor in the catalytic mechanism. Positions 78 and 81 each coordinate Zn(2+).

The protein belongs to the cytidine and deoxycytidylate deaminase family. In terms of assembly, homodimer. Zn(2+) is required as a cofactor.

The catalysed reaction is adenosine(34) in tRNA + H2O + H(+) = inosine(34) in tRNA + NH4(+). Its function is as follows. Catalyzes the deamination of adenosine to inosine at the wobble position 34 of tRNA(Arg2). The sequence is that of tRNA-specific adenosine deaminase from Rickettsia typhi (strain ATCC VR-144 / Wilmington).